A 195-amino-acid polypeptide reads, in one-letter code: 7-methyl-GTP pyrophosphatase (195 aa).

The active-site Proton acceptor is Asp71.

This sequence belongs to the Maf family. YceF subfamily. It depends on a divalent metal cation as a cofactor.

It is found in the cytoplasm. The catalysed reaction is N(7)-methyl-GTP + H2O = N(7)-methyl-GMP + diphosphate + H(+). Its function is as follows. Nucleoside triphosphate pyrophosphatase that hydrolyzes 7-methyl-GTP (m(7)GTP). May have a dual role in cell division arrest and in preventing the incorporation of modified nucleotides into cellular nucleic acids. In Shewanella oneidensis (strain ATCC 700550 / JCM 31522 / CIP 106686 / LMG 19005 / NCIMB 14063 / MR-1), this protein is 7-methyl-GTP pyrophosphatase.